Consider the following 723-residue polypeptide: Probable dipeptidyl-peptidase 5 (723 aa).

The first 19 residues, methionine 1–alanine 19, serve as a signal peptide directing secretion. Asparagine 79, asparagine 97, asparagine 154, asparagine 255, asparagine 381, and asparagine 451 each carry an N-linked (GlcNAc...) asparagine glycan. The active-site Charge relay system is serine 561. A glycan (N-linked (GlcNAc...) asparagine) is linked at asparagine 608. Residues aspartate 644 and histidine 676 each act as charge relay system in the active site.

It belongs to the peptidase S9C family.

It localises to the secreted. Functionally, extracellular dipeptidyl-peptidase which removes N-terminal dipeptides sequentially from polypeptides having unsubstituted N-termini. The polypeptide is Probable dipeptidyl-peptidase 5 (dpp5) (Aspergillus terreus (strain NIH 2624 / FGSC A1156)).